The sequence spans 943 residues: Protein translocase subunit SecA (943 aa).

Residues Gln-90, Gly-108 to Thr-112, and Asp-509 each bind ATP. Residues Pro-535–Lys-564 are disordered.

It belongs to the SecA family. As to quaternary structure, monomer and homodimer. Part of the essential Sec protein translocation apparatus which comprises SecA, SecYEG and auxiliary proteins SecDF. Other proteins may also be involved.

Its subcellular location is the cell inner membrane. The protein localises to the cellular thylakoid membrane. The protein resides in the cytoplasm. The enzyme catalyses ATP + H2O + cellular proteinSide 1 = ADP + phosphate + cellular proteinSide 2.. In terms of biological role, part of the Sec protein translocase complex. Interacts with the SecYEG preprotein conducting channel. Has a central role in coupling the hydrolysis of ATP to the transfer of proteins into and across the cell membrane, serving as an ATP-driven molecular motor driving the stepwise translocation of polypeptide chains across the membrane. Probably participates in protein translocation into and across both the cytoplasmic and thylakoid membranes in cyanobacterial cells. The chain is Protein translocase subunit SecA from Prochlorococcus marinus (strain MIT 9215).